Consider the following 98-residue polypeptide: Cystatin-A (98 aa).

Met-1 bears the N-acetylmethionine mark. The Secondary area of contact motif lies at 46–50; the sequence is QVVAG.

The protein belongs to the cystatin family.

The protein localises to the cytoplasm. In terms of biological role, this is an intracellular thiol proteinase inhibitor. In Felis catus (Cat), this protein is Cystatin-A (CSTA).